Reading from the N-terminus, the 305-residue chain is Putative S-adenosyl-L-methionine-dependent methyltransferase MAB_3787 (305 aa).

S-adenosyl-L-methionine contacts are provided by residues Asp-132 and 161–162 (DL).

It belongs to the UPF0677 family.

Its function is as follows. Exhibits S-adenosyl-L-methionine-dependent methyltransferase activity. The protein is Putative S-adenosyl-L-methionine-dependent methyltransferase MAB_3787 of Mycobacteroides abscessus (strain ATCC 19977 / DSM 44196 / CCUG 20993 / CIP 104536 / JCM 13569 / NCTC 13031 / TMC 1543 / L948) (Mycobacterium abscessus).